The chain runs to 640 residues: Threonine--tRNA ligase (640 aa).

A TGS domain is found at 1 to 61; the sequence is MPIITLPDGN…EKDSEVNIIT (61 aa). A catalytic region spans residues 242–533; it reads DHRRIAKQMS…LIEHYAGRMP (292 aa). Zn(2+)-binding residues include cysteine 333, histidine 384, and histidine 510.

This sequence belongs to the class-II aminoacyl-tRNA synthetase family. In terms of assembly, homodimer. Requires Zn(2+) as cofactor.

The protein resides in the cytoplasm. It carries out the reaction tRNA(Thr) + L-threonine + ATP = L-threonyl-tRNA(Thr) + AMP + diphosphate + H(+). In terms of biological role, catalyzes the attachment of threonine to tRNA(Thr) in a two-step reaction: L-threonine is first activated by ATP to form Thr-AMP and then transferred to the acceptor end of tRNA(Thr). Also edits incorrectly charged L-seryl-tRNA(Thr). In Prochlorococcus marinus (strain MIT 9303), this protein is Threonine--tRNA ligase.